The sequence spans 413 residues: Protein arginine N-methyltransferase 2 (413 aa).

The interval 148 to 187 (LDGSDTEMGDKGGSARDVPASADSAPADSAGHSSSEPTAV) is disordered. The segment covering 162-182 (ARDVPASADSAPADSAGHSSS) has biased composition (low complexity). The RMT2 domain occupies 192–413 (TAAHQDTYLQ…HYYHPEISFQ (222 aa)). S-adenosyl-L-methionine-binding positions include Y199, M229, 252–257 (FGMGII), 273–275 (EAH), 300–301 (WQ), and D321.

The protein belongs to the class I-like SAM-binding methyltransferase superfamily. RMT2 methyltransferase family. Monomer.

The protein resides in the cytoplasm. The protein localises to the nucleus. Functionally, S-adenosyl-L-methionine-dependent protein-arginine N-methyltransferase that methylates the delta-nitrogen atom of arginine residues to form N5-methylarginine (type IV) in target proteins. Monomethylates ribosomal protein L12. This Eremothecium gossypii (strain ATCC 10895 / CBS 109.51 / FGSC 9923 / NRRL Y-1056) (Yeast) protein is Protein arginine N-methyltransferase 2.